Here is a 212-residue protein sequence, read N- to C-terminus: Uridine kinase (212 aa).

Residue Gly13–Ser20 participates in ATP binding.

Belongs to the uridine kinase family.

Its subcellular location is the cytoplasm. It carries out the reaction uridine + ATP = UMP + ADP + H(+). It catalyses the reaction cytidine + ATP = CMP + ADP + H(+). It functions in the pathway pyrimidine metabolism; CTP biosynthesis via salvage pathway; CTP from cytidine: step 1/3. Its pathway is pyrimidine metabolism; UMP biosynthesis via salvage pathway; UMP from uridine: step 1/1. The sequence is that of Uridine kinase from Shewanella amazonensis (strain ATCC BAA-1098 / SB2B).